Reading from the N-terminus, the 763-residue chain is Thiamine biosynthesis multifunctional protein ThiED (763 aa).

The tract at residues 1 to 210 (MTDFSLYLVT…ANPAAAATRL (210 aa)) is thiamine-phosphate synthase. 4-amino-2-methyl-5-(diphosphooxymethyl)pyrimidine contacts are provided by residues 37–41 (QLRDK) and Asn69. Mg(2+) contacts are provided by Asp70 and Asp88. Residue Ser107 coordinates 4-amino-2-methyl-5-(diphosphooxymethyl)pyrimidine. 140–142 (TAT) is a binding site for 2-[(2R,5Z)-2-carboxy-4-methylthiazol-5(2H)-ylidene]ethyl phosphate. Lys143 is a 4-amino-2-methyl-5-(diphosphooxymethyl)pyrimidine binding site. Residues Gly174 and 194-195 (VS) each bind 2-[(2R,5Z)-2-carboxy-4-methylthiazol-5(2H)-ylidene]ethyl phosphate. The hydroxymethylpyrimidine/phosphomethylpyrimidine kinase stretch occupies residues 245–500 (LSIAGTDPTG…GTGNGPVDHG (256 aa)). Gln282 contributes to the 4-amino-5-hydroxymethyl-2-methylpyrimidine binding site. A thiaminase-2 region spans residues 550–763 (FTRALWEASG…RHGWTMVGSS (214 aa)).

In the N-terminal section; belongs to the thiamine-phosphate synthase family. The protein in the central section; belongs to the ThiD family. It in the C-terminal section; belongs to the thiaminase-2 family. Requires Mg(2+) as cofactor.

It carries out the reaction 2-[(2R,5Z)-2-carboxy-4-methylthiazol-5(2H)-ylidene]ethyl phosphate + 4-amino-2-methyl-5-(diphosphooxymethyl)pyrimidine + 2 H(+) = thiamine phosphate + CO2 + diphosphate. The enzyme catalyses 2-(2-carboxy-4-methylthiazol-5-yl)ethyl phosphate + 4-amino-2-methyl-5-(diphosphooxymethyl)pyrimidine + 2 H(+) = thiamine phosphate + CO2 + diphosphate. The catalysed reaction is 4-methyl-5-(2-phosphooxyethyl)-thiazole + 4-amino-2-methyl-5-(diphosphooxymethyl)pyrimidine + H(+) = thiamine phosphate + diphosphate. It catalyses the reaction 4-amino-5-hydroxymethyl-2-methylpyrimidine + ATP = 4-amino-2-methyl-5-(phosphooxymethyl)pyrimidine + ADP + H(+). It carries out the reaction 4-amino-2-methyl-5-(phosphooxymethyl)pyrimidine + ATP = 4-amino-2-methyl-5-(diphosphooxymethyl)pyrimidine + ADP. It participates in cofactor biosynthesis; thiamine diphosphate biosynthesis; 4-amino-2-methyl-5-diphosphomethylpyrimidine from 5-amino-1-(5-phospho-D-ribosyl)imidazole: step 3/3. Its pathway is cofactor biosynthesis; thiamine diphosphate biosynthesis; thiamine phosphate from 4-amino-2-methyl-5-diphosphomethylpyrimidine and 4-methyl-5-(2-phosphoethyl)-thiazole: step 1/1. In terms of biological role, condenses 4-methyl-5-(beta-hydroxyethyl)thiazole monophosphate (THZ-P) and 2-methyl-4-amino-5-hydroxymethyl pyrimidine pyrophosphate (HMP-PP) to form thiamine monophosphate (TMP). Functionally, catalyzes the phosphorylation of hydroxymethylpyrimidine phosphate (HMP-P) to HMP-PP, and of HMP to HMP-P. In Corynebacterium glutamicum (strain ATCC 13032 / DSM 20300 / JCM 1318 / BCRC 11384 / CCUG 27702 / LMG 3730 / NBRC 12168 / NCIMB 10025 / NRRL B-2784 / 534), this protein is Thiamine biosynthesis multifunctional protein ThiED (theD).